The following is a 215-amino-acid chain: Thiamine-phosphate synthase (215 aa).

Residues Gln37–Lys41 and Asn69 contribute to the 4-amino-2-methyl-5-(diphosphooxymethyl)pyrimidine site. Mg(2+) is bound by residues Asp70 and Asp89. Position 108 (Ser108) interacts with 4-amino-2-methyl-5-(diphosphooxymethyl)pyrimidine. Thr134–Thr136 provides a ligand contact to 2-[(2R,5Z)-2-carboxy-4-methylthiazol-5(2H)-ylidene]ethyl phosphate. Lys137 lines the 4-amino-2-methyl-5-(diphosphooxymethyl)pyrimidine pocket. Residues Gly166 and Val186 to Ser187 each bind 2-[(2R,5Z)-2-carboxy-4-methylthiazol-5(2H)-ylidene]ethyl phosphate.

Belongs to the thiamine-phosphate synthase family. Mg(2+) serves as cofactor.

It catalyses the reaction 2-[(2R,5Z)-2-carboxy-4-methylthiazol-5(2H)-ylidene]ethyl phosphate + 4-amino-2-methyl-5-(diphosphooxymethyl)pyrimidine + 2 H(+) = thiamine phosphate + CO2 + diphosphate. It carries out the reaction 2-(2-carboxy-4-methylthiazol-5-yl)ethyl phosphate + 4-amino-2-methyl-5-(diphosphooxymethyl)pyrimidine + 2 H(+) = thiamine phosphate + CO2 + diphosphate. The catalysed reaction is 4-methyl-5-(2-phosphooxyethyl)-thiazole + 4-amino-2-methyl-5-(diphosphooxymethyl)pyrimidine + H(+) = thiamine phosphate + diphosphate. The protein operates within cofactor biosynthesis; thiamine diphosphate biosynthesis; thiamine phosphate from 4-amino-2-methyl-5-diphosphomethylpyrimidine and 4-methyl-5-(2-phosphoethyl)-thiazole: step 1/1. Condenses 4-methyl-5-(beta-hydroxyethyl)thiazole monophosphate (THZ-P) and 2-methyl-4-amino-5-hydroxymethyl pyrimidine pyrophosphate (HMP-PP) to form thiamine monophosphate (TMP). The protein is Thiamine-phosphate synthase of Yersinia pseudotuberculosis serotype I (strain IP32953).